The chain runs to 296 residues: CDP-diacylglycerol--glycerol-3-phosphate 3-phosphatidyltransferase 1, chloroplastic/mitochondrial (296 aa).

The N-terminal 39 residues, 1 to 39, are a transit peptide targeting the chloroplast and mitochondrion; the sequence is MLRSGLASLIVDVNLRRTLRPSPTFSFPAHLSRCIITSR. Positions 62–82 are enriched in low complexity; the sequence is FSSSSSSEQSRPTSSSRNSFS. A disordered region spans residues 62 to 103; sequence FSSSSSSEQSRPTSSSRNSFSGHGQLDSDDNSSPPPSQSSSK. Helical transmembrane passes span 104–124, 126–146, 164–184, 189–209, and 261–281; these read VLTLPTVLTLGRVAAVPLLVA, FYVDSWWGTTATTSIFIAAAI, FGAFLDPVADKLMVAATLILL, IQVAELGPLPWLLTVPSIAII, and VGWLVASGAGLLYVSAGLSVW.

It belongs to the CDP-alcohol phosphatidyltransferase class-I family. Mn(2+) is required as a cofactor.

It is found in the plastid. It localises to the chloroplast membrane. Its subcellular location is the mitochondrion membrane. It carries out the reaction a CDP-1,2-diacyl-sn-glycerol + sn-glycerol 3-phosphate = a 1,2-diacyl-sn-glycero-3-phospho-(1'-sn-glycero-3'-phosphate) + CMP + H(+). It participates in phospholipid metabolism; phosphatidylglycerol biosynthesis; phosphatidylglycerol from CDP-diacylglycerol: step 1/2. Catalyzes the committed step to the synthesis of the acidic phospholipids, including phosphatidylglycerol (PG). Transfers specifically a phosphatidyl group from CDP-diacylglycerol to glycerol-3-phosphate to form phosphatidylglycerophosphate. Cannot catalyze the phosphatidyl group transfer to inositol, serine, choline or phosphatidylglycerol. Possesses high activity with CDP-dipalmitoylglycerol and low activity with CDP-dioleoylglycerol. Essential for chloroplast differentiation and PG accumulation in thylakoids, an essential process for the assembly of antenna-reaction center complexes to optimize energy transfer from antenna pigments, and for subsequent photochemical efficiency of photosystem II (PSII). During cold acclimation (at 5 degrees Celsius), necessary for the photosystem I (PSI) photochemistry, including both reaction center and light-harvesting integrity. But dispensable in mitochondrion, being redundant with PGPS2 for the production of PG and its derivative cardiolipin (CL) in mitochondrial membranes. Together with PGPS2, required for the proper embryo development by providing PG accurate levels. The polypeptide is CDP-diacylglycerol--glycerol-3-phosphate 3-phosphatidyltransferase 1, chloroplastic/mitochondrial (Arabidopsis thaliana (Mouse-ear cress)).